The sequence spans 116 residues: uncharacterized protein (116 aa).

A helical transmembrane segment spans residues Leu22–Val42.

It localises to the membrane. This is an uncharacterized protein from Saccharomyces cerevisiae (strain ATCC 204508 / S288c) (Baker's yeast).